A 516-amino-acid polypeptide reads, in one-letter code: Immunoglobulin G-binding protein A (516 aa).

Residues 1 to 36 (MKKKNIYSIRKLGVGIASVTLGTLLISGGVTPAANA) form the signal peptide. Positions 7–18 (YSIRKLGVGIAS) match the YSIRK-G/S signaling motif motif. The stretch at 37-92 (AQHDEAQQNAFYQVLNMPNLNADQRNGFIQSLKDDPSQSANVLGEAQKLNDSQAPK) is one Immunoglobulin-binding region E repeat. The Immunoglobulin-binding region D repeat unit spans residues 93 to 153 (ADAQQNNFNK…KKLNESQAPK (61 aa)). Residues 154–211 (ADNNFNKEQQNAFYEILNMPNLNEEQRNGFIQSLKDDPSQSANLLSEAKKLNESQAPK) form an Immunoglobulin-binding region A repeat. One copy of the Immunoglobulin-binding region B repeat lies at 212–269 (ADNKFNKEQQNAFYEILHLPNLNEEQRNGFIQSLKDDPSQSANLLAEAKKLNDAQAPK). Residues 270 to 327 (ADNKFNKEQQNAFYEILHLPNLTEEQRNGFIQSLKDDPSVSKEILAEAKKLNDAQAPK) form an Immunoglobulin-binding region C repeat. Residues 318–420 (KKLNDAQAPK…GNKPGKEDGN (103 aa)) are compositionally biased toward basic and acidic residues. Disordered stretches follow at residues 318–440 (KKLN…ANGT) and 467–487 (KKQPANHADANKAQALPETGE). Repeat copies occupy residues 333–340 (KPGKEDNN), 341–348 (KPGKEDNN), 349–356 (KPGKEDNN), 357–364 (KPGKEDNN), 365–372 (KPGKEDGN), 373–380 (KPGKEDNK), 381–388 (KPGKEDGN), 389–396 (KPGKEDNK), 397–404 (KPGKEDGN), 405–412 (KPGKEDGN), and 413–420 (KPGKEDGN). Residues 333–420 (KPGKEDNNKP…GNKPGKEDGN (88 aa)) are 11 X 8 AA approximate tandem repeats. A LysM domain is found at 421–465 (GVHVVKPGDTVNDIAKANGTTADKIAADNKLADKNMIKPGQELVV). The LPXTG sorting signal signature appears at 482–486 (LPETG). At threonine 485 the chain carries Pentaglycyl murein peptidoglycan amidated threonine. Positions 486-516 (GEENPFIGTTVFGGLSLALGAALLAGRRREL) are cleaved as a propeptide — removed by sortase A.

The protein belongs to the immunoglobulin-binding protein SpA family. As to quaternary structure, interacts with host TNFRSF1A; this interaction leads to the stimulation of both surface expression and shedding of TNFRSF1A.

Its subcellular location is the secreted. It localises to the cell wall. Its function is as follows. Plays a role in the inhibition of the host innate and adaptive immune responses. Possesses five immunoglobulin-binding domains that capture both the fragment crystallizable region (Fc region) and the Fab region (part of Ig that identifies antigen) of immunoglobulins. In turn, Staphylococcus aureus is protected from phagocytic killing via inhibition of Ig Fc region. In addition, the host elicited B-cell response is prevented due to a decrease of antibody-secreting cell proliferation that enter the bone marrow, thereby decreasing long-term antibody production. Inhibits osteogenesis by preventing osteoblast proliferation and expression of alkaline phosphatase, type I collagen, osteopontin and osteocalcin. Acts directly as a pro-inflammatory factor in the lung through its ability to bind and activate tumor necrosis factor alpha receptor 1/TNFRSF1A. The protein is Immunoglobulin G-binding protein A (spa) of Staphylococcus aureus (strain NCTC 8325 / PS 47).